The sequence spans 143 residues: MLRTMLKSKIHRATVTQADLHYVGSVTIDADLMDAADLLEGEQVTIVDIDNGARLVTYAITGERGSGVIGINGAAAHLVHPGDLVILIAYGTMQDAEARAYQPRIVFVDADNKQIDVGHDPAFVPAFDIPGAEELLNPRIGAR.

The active-site Schiff-base intermediate with substrate; via pyruvic acid is the Ser-25. At Ser-25 the chain carries Pyruvic acid (Ser). Thr-57 lines the substrate pocket. Tyr-58 serves as the catalytic Proton donor. Substrate is bound at residue 73 to 75; the sequence is GAA.

Belongs to the PanD family. In terms of assembly, heterooctamer of four alpha and four beta subunits. The cofactor is pyruvate. Post-translationally, is synthesized initially as an inactive proenzyme, which is activated by self-cleavage at a specific serine bond to produce a beta-subunit with a hydroxyl group at its C-terminus and an alpha-subunit with a pyruvoyl group at its N-terminus.

The protein resides in the cytoplasm. It carries out the reaction L-aspartate + H(+) = beta-alanine + CO2. It participates in cofactor biosynthesis; (R)-pantothenate biosynthesis; beta-alanine from L-aspartate: step 1/1. In terms of biological role, catalyzes the pyruvoyl-dependent decarboxylation of aspartate to produce beta-alanine. This is Aspartate 1-decarboxylase from Mycobacterium ulcerans (strain Agy99).